Consider the following 245-residue polypeptide: DNA polymerase zeta processivity subunit (245 aa).

The region spanning 3–203 (RWVEKWLRVY…PPKIKLTSLV (201 aa)) is the HORMA domain.

Belongs to the MAD2 family. As to quaternary structure, forms DNA polymerase zeta with REV3. Interacts with REV1.

It is found in the mitochondrion. Functionally, required for DNA damage induced mutagenesis. Involved in DNA repair, mitochondrial DNA repair and translesion synthesis. Has a role in the bypass of abasic (AP) sites. This Saccharomyces cerevisiae (strain ATCC 204508 / S288c) (Baker's yeast) protein is DNA polymerase zeta processivity subunit (REV7).